A 486-amino-acid chain; its full sequence is Glutamyl-tRNA(Gln) amidotransferase subunit A (486 aa).

Residues lysine 78 and serine 153 each act as charge relay system in the active site. The active-site Acyl-ester intermediate is the serine 177.

It belongs to the amidase family. GatA subfamily. In terms of assembly, heterotrimer of A, B and C subunits.

It catalyses the reaction L-glutamyl-tRNA(Gln) + L-glutamine + ATP + H2O = L-glutaminyl-tRNA(Gln) + L-glutamate + ADP + phosphate + H(+). In terms of biological role, allows the formation of correctly charged Gln-tRNA(Gln) through the transamidation of misacylated Glu-tRNA(Gln) in organisms which lack glutaminyl-tRNA synthetase. The reaction takes place in the presence of glutamine and ATP through an activated gamma-phospho-Glu-tRNA(Gln). This is Glutamyl-tRNA(Gln) amidotransferase subunit A from Syntrophobacter fumaroxidans (strain DSM 10017 / MPOB).